The following is a 499-amino-acid chain: Probable malate:quinone oxidoreductase 4 (499 aa).

Belongs to the MQO family. FAD serves as cofactor.

The catalysed reaction is (S)-malate + a quinone = a quinol + oxaloacetate. The protein operates within carbohydrate metabolism; tricarboxylic acid cycle; oxaloacetate from (S)-malate (quinone route): step 1/1. The chain is Probable malate:quinone oxidoreductase 4 from Staphylococcus epidermidis (strain ATCC 12228 / FDA PCI 1200).